We begin with the raw amino-acid sequence, 211 residues long: Large ribosomal subunit protein uL3 (211 aa).

The tract at residues 130–154 (RGPMAHGSKFHRHQGSNGSATTPGR) is disordered.

Belongs to the universal ribosomal protein uL3 family. As to quaternary structure, part of the 50S ribosomal subunit. Forms a cluster with proteins L14 and L19.

In terms of biological role, one of the primary rRNA binding proteins, it binds directly near the 3'-end of the 23S rRNA, where it nucleates assembly of the 50S subunit. The sequence is that of Large ribosomal subunit protein uL3 from Lachnospira eligens (strain ATCC 27750 / DSM 3376 / VPI C15-48 / C15-B4) (Eubacterium eligens).